The following is a 940-amino-acid chain: Lysine-specific demethylase 7A (940 aa).

The segment at 37-88 (PVYCVCRQPYDVNRFMIECDVCKDWFHGSCVGVEEHHAVDIDLYHCPDCAAL) adopts a PHD-type zinc-finger fold. Residues 97–114 (RRNWHRHDYTEVDDGSKP) are linker. A JmjC domain is found at 230-386 (FSDTKMSELV…MQLRCYEMEK (157 aa)). Thr279 is a binding site for substrate. Fe cation contacts are provided by His282 and Asp284. Lys299 contributes to the substrate binding site. Position 354 (His354) interacts with Fe cation. Disordered regions lie at residues 483–509 (VKSQGIPSVCPVSRPSNEASPPYHSRR), 599–670 (LYTA…PDCT), 710–729 (SQKPSRQEIPVKRECPTSTS), 818–854 (NAQDLSRSQKHIKKESSSEINQKAQSRHCVDSNSSSI), and 876–920 (SPER…MATA). Residue Ser604 is modified to Phosphoserine. A compositionally biased stretch (polar residues) spans 613 to 623 (TQNANMKTEQS). Basic and acidic residues predominate over residues 714 to 724 (SRQEIPVKREC).

It belongs to the JHDM1 histone demethylase family. JHDM1D subfamily. Fe(2+) serves as cofactor.

It is found in the nucleus. The enzyme catalyses N(6),N(6)-dimethyl-L-lysyl(9)-[histone H3] + 2 2-oxoglutarate + 2 O2 = L-lysyl(9)-[histone H3] + 2 formaldehyde + 2 succinate + 2 CO2. The catalysed reaction is N(6),N(6)-dimethyl-L-lysyl(27)-[histone H3] + 2 2-oxoglutarate + 2 O2 = L-lysyl(27)-[histone H3] + 2 formaldehyde + 2 succinate + 2 CO2. It carries out the reaction N(6),N(6)-dimethyl-L-lysyl(36)-[histone H3] + 2-oxoglutarate + O2 = N(6)-methyl-L-lysyl(36)-[histone H3] + formaldehyde + succinate + CO2. It catalyses the reaction N(6)-methyl-L-lysyl(20)-[histone H4] + 2-oxoglutarate + O2 = L-lysyl(20)-[histone H4] + formaldehyde + succinate + CO2. Its function is as follows. Histone demethylase required for brain development. Specifically demethylates dimethylated 'Lys-9', 'Lys-27' and 'Lys-36' (H3K9me2, H3K27me2, H3K36me2, respectively) of histone H3 and monomethylated histone H4 'Lys-20' residue (H4K20Me1), thereby playing a central role in histone code. Specifically binds trimethylated 'Lys-4' of histone H3 (H3K4me3), affecting histone demethylase specificity: in presence of H3K4me3, it has no demethylase activity toward H3K9me2, while it has high activity toward H3K27me2. Demethylates H3K9me2 in absence of H3K4me3. Has activity toward H4K20Me1 only when nucleosome is used as a substrate and when not histone octamer is used as substrate. This Mus musculus (Mouse) protein is Lysine-specific demethylase 7A (Kdm7a).